The primary structure comprises 210 residues: Glycerol-3-phosphate acyltransferase (210 aa).

Transmembrane regions (helical) follow at residues 8-28, 56-76, 87-107, 119-139, 144-164, and 165-185; these read LILLSLVSYVIGSIPFGLLLT, GLAAATLLLDALKGALAVLIA, TMAVAAVAVVIGHCFPVWLGF, TIWVLCWPVGLACCVVWLLVA, ISSAGALAAFLLAPGLMVLLS, and GRPLHTPIPVATLLISLLIWA.

This sequence belongs to the PlsY family. As to quaternary structure, probably interacts with PlsX.

The protein localises to the cell inner membrane. It carries out the reaction an acyl phosphate + sn-glycerol 3-phosphate = a 1-acyl-sn-glycero-3-phosphate + phosphate. It functions in the pathway lipid metabolism; phospholipid metabolism. Functionally, catalyzes the transfer of an acyl group from acyl-phosphate (acyl-PO(4)) to glycerol-3-phosphate (G3P) to form lysophosphatidic acid (LPA). This enzyme utilizes acyl-phosphate as fatty acyl donor, but not acyl-CoA or acyl-ACP. This chain is Glycerol-3-phosphate acyltransferase, found in Gluconobacter oxydans (strain 621H) (Gluconobacter suboxydans).